Consider the following 447-residue polypeptide: Argininosuccinate synthase (447 aa).

Residues 20–28 (AFSGGLDTS) and Ala-46 contribute to the ATP site. Tyr-102 contributes to the L-citrulline binding site. ATP contacts are provided by Gly-132 and Thr-134. L-aspartate is bound by residues Thr-134, Asn-138, and Asp-139. Asn-138 serves as a coordination point for L-citrulline. Asp-139 contributes to the ATP binding site. L-citrulline-binding residues include Arg-142 and Ser-195. Asp-197 contributes to the ATP binding site. Residues Thr-204, Glu-206, and Glu-283 each contribute to the L-citrulline site.

It belongs to the argininosuccinate synthase family. Type 2 subfamily. Homotetramer.

It localises to the cytoplasm. The enzyme catalyses L-citrulline + L-aspartate + ATP = 2-(N(omega)-L-arginino)succinate + AMP + diphosphate + H(+). It participates in amino-acid biosynthesis; L-arginine biosynthesis; L-arginine from L-ornithine and carbamoyl phosphate: step 2/3. In Neisseria meningitidis serogroup C (strain 053442), this protein is Argininosuccinate synthase.